The primary structure comprises 437 residues: Eukaryotic peptide chain release factor subunit 1 (437 aa).

Alanine 2 carries the post-translational modification N-acetylalanine. Residues 61–64 (NIKS) carry the NIKS motif; plays an important role in translational termination motif. Lysine 63 carries the 4-hydroxylysine modification. Residue lysine 87 forms a Glycyl lysine isopeptide (Lys-Gly) (interchain with G-Cter in SUMO2) linkage. N5-methylglutamine is present on glutamine 185. Lysine 279 is covalently cross-linked (Glycyl lysine isopeptide (Lys-Gly) (interchain with G-Cter in ubiquitin)). Threonine 347 is modified (phosphothreonine). Lysine 404 participates in a covalent cross-link: Glycyl lysine isopeptide (Lys-Gly) (interchain with G-Cter in SUMO2).

It belongs to the eukaryotic release factor 1 family. Component of the eRF1-eRF3-GTP ternary complex, composed of ETF1/ERF1 and eRF3 (GSPT1/ERF3A or GSPT2/ERF3B) and GTP. Component of the transient SURF (SMG1-UPF1-eRF1-eRF3) complex. Interacts with JMJD4. The ETF1-GSPT1 complex interacts with JMJD4. Hydroxylation at Lys-63 by JMJD4 promotes its translational termination efficiency. Post-translationally, methylated at Gln-185 by N6AMT1. In terms of processing, ubiquitinated at Lys-279 via 'Lys-6'-linked polyubiquitin chains by RNF14 and RNF25 in response to ribosome collisions (ribosome stalling), leading to its degradation by the proteasome and rescue of stalled ribosomes.

The protein resides in the cytoplasm. Component of the eRF1-eRF3-GTP ternary complex, a ternary complex that mediates translation termination in response to the termination codons. The eRF1-eRF3-GTP complex binds to a stop codon in the ribosomal A-site. ETF1/ERF1 is responsible for stop codon recognition and inducing hydrolysis of peptidyl-tRNA. Following GTP hydrolysis, eRF3 (GSPT1/ERF3A or GSPT2/ERF3B) dissociates, permitting ETF1/eRF1 to accommodate fully in the A-site, followed by hydrolysis of peptidyl-tRNA. Component of the transient SURF complex which recruits UPF1 to stalled ribosomes in the context of nonsense-mediated decay (NMD) of mRNAs containing premature stop codons. Required for SHFL-mediated translation termination which inhibits programmed ribosomal frameshifting (-1PRF) of mRNA from viruses and cellular genes. The sequence is that of Eukaryotic peptide chain release factor subunit 1 (ETF1) from Bos taurus (Bovine).